A 963-amino-acid polypeptide reads, in one-letter code: Non-ribosomal peptide synthetase CmlP (963 aa).

Positions 492 to 568 constitute a Carrier domain; sequence GEDAAELRRV…AAFLRHLRGE (77 aa). Serine 526 is subject to O-(pantetheine 4'-phosphoryl)serine. The disordered stretch occupies residues 928–963; sequence GRLLGTPPDTPAGDRPERTGTTAEAQNGAAHAPTPR.

The protein belongs to the ATP-dependent AMP-binding enzyme family. The cofactor is pantetheine 4'-phosphate.

It carries out the reaction 4-amino-L-phenylalanine + holo-[peptidyl-carrier protein] + ATP = 4-amino-L-phenylalanyl-[peptidyl-carrier protein] + AMP + diphosphate. The protein operates within antibiotic biosynthesis. Its function is as follows. Involved in chloramphenicol biosynthesis. Activates 4-amino-L-phenylalanine by adenylation and loads it onto its peptidyl carrier domain, via a thioester linkage to the phosphopanthetheine moiety. Can also adenylate tyrosine and phenylalanine at low rates, but not L-p-nitrophenylalanine or threo-phenylserine. This Streptomyces venezuelae (strain ATCC 10712 / CBS 650.69 / DSM 40230 / JCM 4526 / NBRC 13096 / PD 04745) protein is Non-ribosomal peptide synthetase CmlP.